We begin with the raw amino-acid sequence, 353 residues long: Peptide-N(4)-(N-acetyl-beta-glucosaminyl)asparagine amidase (353 aa).

3 residues coordinate Zn(2+): C125, C128, and C159. C185 serves as the catalytic Nucleophile. Active-site residues include H212 and D229. Residue E232 coordinates substrate. A disordered region spans residues 316-353 (SLEKTKPSKDTSTTTLTGTKGRESGSTAWKQQRGEDGS). The segment covering 325 to 334 (DTSTTTLTGT) has biased composition (low complexity).

This sequence belongs to the transglutaminase-like superfamily. PNGase family. Zn(2+) is required as a cofactor.

The protein localises to the cytoplasm. The enzyme catalyses Hydrolysis of an N(4)-(acetyl-beta-D-glucosaminyl)asparagine residue in which the glucosamine residue may be further glycosylated, to yield a (substituted) N-acetyl-beta-D-glucosaminylamine and a peptide containing an aspartate residue.. In terms of biological role, specifically deglycosylates the denatured form of N-linked glycoproteins in the cytoplasm and assists their proteasome-mediated degradation. Cleaves the beta-aspartyl-glucosamine (GlcNAc) of the glycan and the amide side chain of Asn, converting Asn to Asp. Prefers proteins containing high-mannose over those bearing complex type oligosaccharides. Can recognize misfolded proteins in the endoplasmic reticulum that are exported to the cytosol to be destroyed and deglycosylate them, while it has no activity toward native proteins. Deglycosylation is a prerequisite for subsequent proteasome-mediated degradation of some, but not all, misfolded glycoproteins. The sequence is that of Peptide-N(4)-(N-acetyl-beta-glucosaminyl)asparagine amidase (PNG1) from Kluyveromyces lactis (strain ATCC 8585 / CBS 2359 / DSM 70799 / NBRC 1267 / NRRL Y-1140 / WM37) (Yeast).